The sequence spans 482 residues: uncharacterized protein (482 aa).

Positions 5-79 (IYYKFKSQKD…STSVIVRRVP (75 aa)) constitute a DWNN domain. The disordered stretch occupies residues 86 to 108 (GTAARYVSGAPKTTGARSDSVKR). A CCHC-type zinc finger spans residues 183–200 (YICYRCGQKGHWIQACPT). Residues 282-322 (CTLCKKLARNACRTPCCDKLFCEECIQTALLDSDFECPNCH) form an RING-type; degenerate zinc finger. 2 disordered regions span residues 346 to 393 (KSVL…SSAV) and 447 to 482 (QVYHNNRNPPRTNSRPSNASVPPPSSLHKNPPTKTN). Over residues 451–466 (NNRNPPRTNSRPSNAS) the composition is skewed to low complexity.

It localises to the nucleus. This is an uncharacterized protein from Schizosaccharomyces pombe (strain 972 / ATCC 24843) (Fission yeast).